Here is a 265-residue protein sequence, read N- to C-terminus: MSEEVTYADLQFQNSSEMEKIPEIGKFGEKAPPAPSHVWRPAALFLTLLCLLLLIGLGVLASMFHVTLKIEMKKMNKLQNISEELQRNISLQLMSNMNISNKIRNLSTTLQTIATKLCRELYSKEQEHKCKPCPRRWIWHKDSCYFLSDDVQTWQESKMACAAQNASLLKINNKNALEFIKSQSRSYDYWLGLSPEEDSTRGMRVDNIINSSAWVIRNAPDLNNMYCGYINRLYVQYYHCTYKKRMICEKMANPVQLGSTYFREA.

At 1–43 (MSEEVTYADLQFQNSSEMEKIPEIGKFGEKAPPAPSHVWRPAA) the chain is on the cytoplasmic side. Residues 5–10 (VTYADL) carry the ITIM motif motif. Tyr-7 carries the phosphotyrosine modification. Residues 44–64 (LFLTLLCLLLLIGLGVLASMF) form a helical; Signal-anchor for type II membrane protein membrane-spanning segment. Residues 65–265 (HVTLKIEMKK…QLGSTYFREA (201 aa)) are Extracellular-facing. Residues Asn-88 and Asn-98 are each glycosylated (N-linked (GlcNAc...) asparagine). Cystine bridges form between Cys-118/Cys-130, Cys-133/Cys-144, Cys-161/Cys-248, and Cys-227/Cys-240. In terms of domain architecture, C-type lectin spans 140–249 (HKDSCYFLSD…CTYKKRMICE (110 aa)). Residue Asn-165 is glycosylated (N-linked (GlcNAc...) asparagine).

In terms of assembly, homodimer; disulfide-linked. Interacts (when the ITIM motif is phosphorylated) with PTPN6 and PTPN11. Phosphorylated at Tyr-7 by SRC in the ITIM motif following ligand-binding, promoting recruitment of tyrosine-protein phosphatases PTPN6 and PTPN11. Post-translationally, highly N-glycosylated; glycosylation varies between cell types. In terms of tissue distribution, preferentially expressed in lymphoid tissues and immune cells, including natural killer (NK) cells, T-cells, dendritic cells and monocytes or macrophages. Detected in spleen macrophage-rich red pulp and in lymph node (at protein level). Detected in peripheral blood leukocytes, dendritic cells, bone marrow, monocytes, mononuclear leukocytes and macrophages.

The protein localises to the cell membrane. Its function is as follows. Myeloid inhibitory C-type lectin receptor that acts as a negative regulator of myeloid cell activation. Myeloid cell inhibition is required to limit proinflammatory pathways and protect against excessive inflammation. Specifically recognizes and binds various structures, such as neutrophil extracellular traps (NETs) or monosodium urate crystals. Also acts as a pattern-recognition receptor for pathogen-associated molecules, such as plasmodium hemozoin or mycobacterial micolic acid. Ligand-binding induces phosphorylation of its ITIM motif, followed by recruitment of tyrosine-protein phosphatases PTPN6 and PTPN11, which counteract tyrosine-protein kinase SYK, thereby preventing myeloid cell activation. Acts as a pattern-recognition receptor for NETs in neutrophils: specifically recognizes DNA in NETs, leading to inhibit neutrophil activation and limit further NET formation. This regulation is essential for controlling key neutrophil responses and limit NET-mediated inflammatory conditions. Also recognizes dead cells by acting as a receptor for monosodium urate crystals, leading to down-regulate neutrophil activation. Binding to monosodium urate crystals also promotes the type I interferon response. Acts as an inhibitor of natural killer (NK) cell cytotoxicity. Also acts as an ihibitor of dendritic cell maturation in an IL10-dependent manner. In Homo sapiens (Human), this protein is C-type lectin domain family 12 member A.